A 1105-amino-acid polypeptide reads, in one-letter code: Lysylphosphatidylglycerol biosynthesis bifunctional protein LysX (1105 aa).

Positions 1-603 are phosphatidylglycerol lysyltransferase; that stretch reads MTVTKPRSVQ…LLHHDGSAPD (603 aa). The next 7 membrane-spanning stretches (helical) occupy residues 20–40, 62–82, 86–106, 117–137, 154–174, 186–203, and 208–228; these read VPAAAGWAVGVIATLSLLASI, FPDTSFAWSFVLALLAAALAA, IAWLLLLTNVVLAAFLNAADI, FGENLGFEVHVVAIVVLVLGY, AVLVAGGAIGILVSWGLVDLF, YVANRVIGFALADPDLFT, and VFLNAMFGLFGALALIAATIV. The interval 604-1105 is lysine--tRNA ligase; the sequence is VSGLRQSAIA…TLPFPLAKPH (502 aa). Mg(2+)-binding residues include D1017 and E1024.

This sequence in the N-terminal section; belongs to the LPG synthetase family. It in the C-terminal section; belongs to the class-II aminoacyl-tRNA synthetase family. Mg(2+) serves as cofactor.

The protein localises to the cell membrane. It catalyses the reaction tRNA(Lys) + L-lysine + ATP = L-lysyl-tRNA(Lys) + AMP + diphosphate. The catalysed reaction is L-lysyl-tRNA(Lys) + a 1,2-diacyl-sn-glycero-3-phospho-(1'-sn-glycerol) = a 1,2-diacyl-sn-glycero-3-phospho-1'-(3'-O-L-lysyl)-sn-glycerol + tRNA(Lys). Functionally, catalyzes the production of L-lysyl-tRNA(Lys)transfer and the transfer of a lysyl group from L-lysyl-tRNA(Lys) to membrane-bound phosphatidylglycerol (PG), which produces lysylphosphatidylglycerol (LPG), one of the components of the bacterial membrane with a positive net charge. LPG synthesis contributes to the resistance to cationic antimicrobial peptides (CAMPs) and likely protects M.tuberculosis against the CAMPs produced by competiting microorganisms (bacteriocins). In fact, the modification of anionic phosphatidylglycerol with positively charged L-lysine results in repulsion of the peptides. This Mycobacterium ulcerans (strain Agy99) protein is Lysylphosphatidylglycerol biosynthesis bifunctional protein LysX (lysX).